A 323-amino-acid chain; its full sequence is MNPLLDVKNLYVRFKTPDGVVTAVNDLNFTLNAGSTLGIVGESGSGKSQTAFALMGLLAANGEVEGSAIFEGKELVNLPNAELNKIRAEQISMIFQDPMTSLNPYMKIGEQLMEVLQLHKGYDKQTAFAESVKMLDAVKMPEAKKRMGMYPHEFSGGMRQRVMIAMALLCRPKLLIADEPTTALDVTVQAQIMTLLNELKREFNTAIIMITHDLGVVAGICDQVMVMYAGRTMEYGTAEQIFYHPTHPYSIGLMDAIPRLDGNEEHLVTIPGNPPNLLHLPKGCPFSPRCQFATEQCQIAPKLTTFNHGQLRNCWLSAEKFNL.

Residues 5-254 (LDVKNLYVRF…PTHPYSIGLM (250 aa)) form the ABC transporter domain. 41–48 (GESGSGKS) is an ATP binding site.

The protein belongs to the ABC transporter superfamily. As to quaternary structure, the complex is composed of two ATP-binding proteins (OppD and OppF), two transmembrane proteins (OppB and OppC) and a solute-binding protein (OppA or MppA).

It is found in the cell inner membrane. It carries out the reaction a [peptide](out) + ATP + H2O = a [peptide](in) + ADP + phosphate + H(+). Part of the ABC transporter complex OppABCDF involved in the uptake of oligopeptides. Probably responsible for energy coupling to the transport system. This Haemophilus influenzae (strain ATCC 51907 / DSM 11121 / KW20 / Rd) protein is Oligopeptide transport ATP-binding protein OppD (oppD).